Consider the following 726-residue polypeptide: Biotin--protein ligase (726 aa).

A disordered region spans residues 28–98 (EVKDQVSNKQ…SDRGGGPVEH (71 aa)). A compositionally biased stretch (basic and acidic residues) spans 43-75 (PKPEPSLEIKPEQDGMEHVGRDDPKALGEEPKQ). Phosphoserine is present on residues Ser-147 and Ser-299. Residues 463–652 (KQLGKVILFA…VLEKLIKEFQ (190 aa)) form the BPL/LPL catalytic domain.

Belongs to the biotin--protein ligase family. Monomer. As to expression, widely expressed. Mostly expressed in muscle, placenta and to a lower extent in the brain, kidney, pancreas, liver and lung.

Its subcellular location is the cytoplasm. The protein resides in the mitochondrion. The enzyme catalyses apo-[methylmalonyl-CoA:pyruvate carboxytransferase] + biotin + ATP = holo-[methylmalonyl-CoA:pyruvate carboxytransferase] + AMP + diphosphate + H(+). It catalyses the reaction apo-[propionyl-CoA:carbon-dioxide ligase (ADP-forming)] + biotin + ATP = holo-[propionyl-CoA:carbon-dioxide ligase (ADP-forming)] + AMP + diphosphate + H(+). The catalysed reaction is apo-[3-methylcrotonoyl-CoA:carbon-dioxide ligase (ADP-forming)] + biotin + ATP = holo-[3-methylcrotonoyl-CoA:carbon-dioxide ligase (ADP-forming)] + AMP + diphosphate + H(+). It carries out the reaction biotin + L-lysyl-[protein] + ATP = N(6)-biotinyl-L-lysyl-[protein] + AMP + diphosphate + H(+). Biotin--protein ligase catalyzing the biotinylation of the 4 biotin-dependent carboxylases acetyl-CoA-carboxylase, pyruvate carboxylase, propionyl-CoA carboxylase, and methylcrotonyl-CoA carboxylase. The protein is Biotin--protein ligase of Homo sapiens (Human).